The sequence spans 382 residues: ATP phosphoribosyltransferase regulatory subunit (382 aa).

It belongs to the class-II aminoacyl-tRNA synthetase family. HisZ subfamily. As to quaternary structure, heteromultimer composed of HisG and HisZ subunits.

The protein resides in the cytoplasm. It functions in the pathway amino-acid biosynthesis; L-histidine biosynthesis; L-histidine from 5-phospho-alpha-D-ribose 1-diphosphate: step 1/9. In terms of biological role, required for the first step of histidine biosynthesis. May allow the feedback regulation of ATP phosphoribosyltransferase activity by histidine. This chain is ATP phosphoribosyltransferase regulatory subunit, found in Burkholderia pseudomallei (strain K96243).